Reading from the N-terminus, the 90-residue chain is MLKKQFVVYGIVQGVGFRYFTWKKATEIGLNGIVKNQRDGSVYILAEGSASQIDSFRDWLSHGPPSARVDRVEENDYSGTHSFGLFSVEH.

The region spanning 3 to 90 is the Acylphosphatase-like domain; the sequence is KKQFVVYGIV…HSFGLFSVEH (88 aa). Residues Arg-18 and Asn-36 contribute to the active site.

Belongs to the acylphosphatase family.

The enzyme catalyses an acyl phosphate + H2O = a carboxylate + phosphate + H(+). The sequence is that of Acylphosphatase (acyP) from Mannheimia succiniciproducens (strain KCTC 0769BP / MBEL55E).